A 468-amino-acid chain; its full sequence is Glutamate--tRNA ligase 2 (468 aa).

The 'HIGH' region motif lies at 9-19; that stretch reads PSPTGSLHLGG. Residues 238–242 carry the 'KMSKS' region motif; the sequence is KLSKR. Residue Lys241 participates in ATP binding.

It belongs to the class-I aminoacyl-tRNA synthetase family. Glutamate--tRNA ligase type 1 subfamily. As to quaternary structure, monomer.

The protein resides in the cytoplasm. The catalysed reaction is tRNA(Glu) + L-glutamate + ATP = L-glutamyl-tRNA(Glu) + AMP + diphosphate. In terms of biological role, catalyzes the attachment of glutamate to tRNA(Glu) in a two-step reaction: glutamate is first activated by ATP to form Glu-AMP and then transferred to the acceptor end of tRNA(Glu). The chain is Glutamate--tRNA ligase 2 from Anaplasma phagocytophilum (strain HZ).